The following is a 550-amino-acid chain: Methionine--tRNA ligase (550 aa).

Residues 10–22 (LPYPNNSSPHLGN) carry the 'HIGH' region motif. Positions 336-340 (KFSKS) match the 'KMSKS' region motif. Lysine 339 lines the ATP pocket.

It belongs to the class-I aminoacyl-tRNA synthetase family.

The catalysed reaction is tRNA(Met) + L-methionine + ATP = L-methionyl-tRNA(Met) + AMP + diphosphate. The polypeptide is Methionine--tRNA ligase (MARS) (Acanthamoeba polyphaga mimivirus (APMV)).